A 209-amino-acid polypeptide reads, in one-letter code: Probable GTP-binding protein EngB (209 aa).

The EngB-type G domain maps to 12–203; it reads VSFEIIFVGR…RDRLHEMKRD (192 aa). Residues 20–27, 45–49, 62–65, 142–145, and 179–181 contribute to the GTP site; these read GRSNVGKS, GVTLR, DMPG, NKMD, and ISA. Positions 27 and 47 each coordinate Mg(2+).

This sequence belongs to the TRAFAC class TrmE-Era-EngA-EngB-Septin-like GTPase superfamily. EngB GTPase family. Mg(2+) serves as cofactor.

Necessary for normal cell division and for the maintenance of normal septation. The sequence is that of Probable GTP-binding protein EngB from Methanosarcina barkeri (strain Fusaro / DSM 804).